Reading from the N-terminus, the 96-residue chain is Protein Vpr (96 aa).

The segment at 1–42 (MEQAPEDQGPQREPYNEWTLELLEELKSEAVRHFPRLWLHSL) is homooligomerization. 3 positions are modified to phosphoserine; by host: Ser79, Ser94, and Ser96.

Belongs to the HIV-1 VPR protein family. As to quaternary structure, homooligomer, may form homodimer. Interacts with p6-gag region of the Pr55 Gag precursor protein through a (Leu-X-X)4 motif near the C-terminus of the P6gag protein. Interacts with host UNG. May interact with host RAD23A/HHR23A. Interacts with host VPRBP/DCAF1, leading to hijack the CUL4A-RBX1-DDB1-DCAF1/VPRBP complex, mediating ubiquitination of host proteins such as TERT and ZGPAT and arrest of the cell cycle in G2 phase. Post-translationally, phosphorylated on several residues by host. These phosphorylations regulate VPR activity for the nuclear import of the HIV-1 pre-integration complex.

The protein localises to the virion. Its subcellular location is the host nucleus. It is found in the host extracellular space. Functionally, during virus replication, may deplete host UNG protein, and incude G2-M cell cycle arrest. Acts by targeting specific host proteins for degradation by the 26S proteasome, through association with the cellular CUL4A-DDB1 E3 ligase complex by direct interaction with host VPRPB/DCAF-1. Cell cycle arrest reportedly occurs within hours of infection and is not blocked by antiviral agents, suggesting that it is initiated by the VPR carried into the virion. Additionally, VPR induces apoptosis in a cell cycle dependent manner suggesting that these two effects are mechanistically linked. Detected in the serum and cerebrospinal fluid of AIDS patient, VPR may also induce cell death to bystander cells. In terms of biological role, during virus entry, plays a role in the transport of the viral pre-integration (PIC) complex to the host nucleus. This function is crucial for viral infection of non-dividing macrophages. May act directly at the nuclear pore complex, by binding nucleoporins phenylalanine-glycine (FG)-repeat regions. In Human immunodeficiency virus type 1 group M subtype B (isolate RF/HAT3) (HIV-1), this protein is Protein Vpr.